The primary structure comprises 92 residues: YcgL domain-containing protein Shewmr7_2249 (92 aa).

Residues 1–85 (MLCAVYKSSR…PQVNLLAEHR (85 aa)) form the YcgL domain.

This Shewanella sp. (strain MR-7) protein is YcgL domain-containing protein Shewmr7_2249.